Consider the following 200-residue polypeptide: Putative calcium-activated potassium channel subunit beta (200 aa).

Residues 1–19 (MLAKKLVTAQKRGETRALC) lie on the Cytoplasmic side of the membrane. Residues 20-40 (LGLGMVACSMMMYFFIGITIV) traverse the membrane as a helical segment. At 41-166 (PFYTKSVWTT…LSRLYPPKGL (126 aa)) the chain is on the extracellular side. The N-linked (GlcNAc...) asparagine glycan is linked to N89. Residues 167-187 (LFTFLWPTLMFTGGCLIIVLV) form a helical membrane-spanning segment. The Cytoplasmic portion of the chain corresponds to 188 to 200 (KISQYFSVLSARQ).

Belongs to the KCNMB (TC 8.A.14.1) family. KCNMB1 subfamily. In terms of assembly, probably interacts with KCNMA1 tetramer.

The protein resides in the membrane. Its function is as follows. Probable regulatory subunit of the calcium activated potassium KCNMA1 (maxiK) channel that modulates the calcium sensitivity and gating kinetics of KCNMA1, thereby contributing to KCNMA1 channel diversity. Increases the apparent Ca(2+)/voltage sensitivity of the KCNMA1 channel. The chain is Putative calcium-activated potassium channel subunit beta (KCNMB1) from Coturnix japonica (Japanese quail).